The chain runs to 33 residues: Nigrocin-1 (33 aa).

The cysteines at positions 27 and 33 are disulfide-linked.

This sequence belongs to the frog skin active peptide (FSAP) family. Brevinin subfamily. In terms of tissue distribution, expressed by the skin dorsal glands.

It localises to the secreted. Functionally, shows antibacterial activity against both Gram-positive and Gram-negative bacteria and against the fungus C.albicans. Has no hemolytic activity. The polypeptide is Nigrocin-1 (Pelophylax nigromaculatus (Black-spotted frog)).